The sequence spans 199 residues: 5'-deoxynucleotidase YfbR (199 aa).

Substrate is bound by residues 18–19 (RW) and His-33. An HD domain is found at 30–142 (VSEHSLQVAM…VKQADALCAY (113 aa)). His-33, His-68, and Asp-69 together coordinate a divalent metal cation. Substrate is bound by residues Asp-69, 77-80 (DLPT), and Asp-137. Residue Asp-137 coordinates a divalent metal cation.

The protein belongs to the 5DNU family. Homodimer. It depends on a divalent metal cation as a cofactor.

The protein resides in the cytoplasm. The enzyme catalyses a 2'-deoxyribonucleoside 5'-phosphate + H2O = a 2'-deoxyribonucleoside + phosphate. Its function is as follows. Catalyzes the strictly specific dephosphorylation of 2'-deoxyribonucleoside 5'-monophosphates. This Salmonella typhi protein is 5'-deoxynucleotidase YfbR.